Reading from the N-terminus, the 135-residue chain is Gene 52 protein (135 aa).

Disordered regions lie at residues 1–20 (MASG…PTPE) and 110–135 (LGGR…AEKQ). The segment covering 122 to 135 (SKPRGRSKHRAEKQ) has biased composition (basic residues).

The protein belongs to the herpesviridae BLRF2 family.

This Equine herpesvirus 2 (strain 86/87) (EHV-2) protein is Gene 52 protein (52).